Consider the following 266-residue polypeptide: Exosome complex component Rrp42 (266 aa).

This sequence belongs to the RNase PH family. Rrp42 subfamily. Component of the archaeal exosome complex. Forms a hexameric ring-like arrangement composed of 3 Rrp41-Rrp42 heterodimers. The hexameric ring associates with a trimer of Rrp4 and/or Csl4 subunits.

Its subcellular location is the cytoplasm. Its function is as follows. Non-catalytic component of the exosome, which is a complex involved in RNA degradation. Contributes to the structuring of the Rrp41 active site. In Methanosarcina acetivorans (strain ATCC 35395 / DSM 2834 / JCM 12185 / C2A), this protein is Exosome complex component Rrp42.